The sequence spans 827 residues: N-terminal kinase-like protein (827 aa).

Positions 1 to 309 (MWFWSRDPAR…PEDFCRHKIL (309 aa)) constitute a Protein kinase domain. HEAT repeat units follow at residues 345–383 (IIPV…VNAQ), 384–422 (IFPH…LNME), and 502–540 (VLPV…EDPS). The segment covering 586–624 (DAAASEGASAPSTASEASKPDTAPSSSAPPAAASTAPTS) has biased composition (low complexity). The segment at 586-827 (DAAASEGASA…PLKLGVRKLD (242 aa)) is disordered. The span at 630 to 640 (EKGAPDNSLDR) shows a compositional bias: basic and acidic residues. The span at 641 to 652 (WDDEDWGSLEDA) shows a compositional bias: acidic residues. Residues 667–678 (DWGHGKTQEKTV) are compositionally biased toward basic and acidic residues. Polar residues-rich tracts occupy residues 679 to 690 (DFSSSRSKTKQV) and 737 to 746 (NWDTSGSSGR). Positions 774-783 (GGDDNWESVE) are enriched in acidic residues. Positions 788–817 (LSKAEMARKKREERQKEIEAKRAERRAAKG) form a coiled coil. Residues 792-814 (EMARKKREERQKEIEAKRAERRA) are compositionally biased toward basic and acidic residues.

This sequence belongs to the protein kinase superfamily.

Regulates COPI-mediated retrograde protein traffic at the interface between the Golgi apparatus and the endoplasmic reticulum. Involved in the maintenance of the Golgi apparatus morphology. The protein is N-terminal kinase-like protein (scyl1) of Xenopus tropicalis (Western clawed frog).